The chain runs to 261 residues: Proliferating cell nuclear antigen (261 aa).

Lys-14, Lys-77, and Lys-80 each carry N6-acetyllysine. The DNA-binding element occupies 61 to 80 (RCDRNLAMGVNLTSMSKILK). Residues Cys-135 and Cys-162 are joined by a disulfide bond. Residue Lys-164 forms a Glycyl lysine isopeptide (Lys-Gly) (interchain with G-Cter in SUMO2); alternate linkage. Lys-164 is covalently cross-linked (Glycyl lysine isopeptide (Lys-Gly) (interchain with G-Cter in ubiquitin); alternate). The residue at position 211 (Tyr-211) is a Phosphotyrosine; by EGFR. At Lys-248 the chain carries N6-acetyllysine. Residue Lys-254 forms a Glycyl lysine isopeptide (Lys-Gly) (interchain with G-Cter in SUMO2) linkage.

It belongs to the PCNA family. In terms of assembly, homotrimer. Interacts with p300/EP300; the interaction occurs on chromatin in UV-irradiated damaged cells. Interacts with CREBBP (via transactivation domain and C-terminus); the interaction occurs on chromatin in UV-irradiated damaged cells. Directly interacts with POLD1, POLD3 and POLD4 subunits of the DNA polymerase delta complex, POLD3 being the major interacting partner; the interaction with POLD3 is inhibited by CDKN1A/p21(CIP1). Forms a complex with activator 1 heteropentamer in the presence of ATP. Interacts with EXO1, POLH, POLK, DNMT1, ERCC5, FEN1, CDC6 and POLDIP2. Interacts with POLB. Interacts with APEX2; this interaction is triggered by reactive oxygen species and increased by misincorporation of uracil in nuclear DNA. Forms a ternary complex with DNTTIP2 and core histone. Interacts with KCTD10. Interacts with PPP1R15A. Interacts with SMARCA5/SNF2H. Interacts with BAZ1B/WSTF; the interaction is direct and is required for BAZ1B/WSTF binding to replication foci during S phase. Interacts with HLTF and SHPRH. Interacts with NUDT15. Interaction is disrupted in response to UV irradiation and acetylation. Interacts with CDKN1A/p21(CIP1) and CDT1; interacts via their PIP-box which also recruits the DCX(DTL) complex. The interaction with CDKN1A inhibits POLD3 binding. Interacts with DDX11. Interacts with EGFR; positively regulates PCNA. Interacts with PARPBP. Interacts (when ubiquitinated) with SPRTN; leading to enhance RAD18-mediated PCNA ubiquitination. Interacts (when polyubiquitinated) with ZRANB3. Interacts with SMARCAD1. Interacts with CDKN1C. Interacts with PCLAF (via PIP-box). Interacts with RTEL1 (via PIP-box); the interaction is direct and essential for the suppression of telomere fragility. Interacts with FAM111A (via PIP-box); the interaction is direct and required for PCNA loading on chromatin binding. Interacts with LIG1. Interacts with SETMAR. Interacts with ANKRD17. Interacts with FBXO18/FBH1 (via PIP-box); the interaction recruits the DCX(DTL) complex and promotes ubiquitination and degradation of FBXO18/FBH1. Interacts with POLN. Interacts with SDE2 (via PIP-box); the interaction is direct and prevents ultraviolet light induced monoubiquitination. Component of the replisome complex composed of at least DONSON, MCM2, MCM7, PCNA and TICRR; interaction at least with PCNA occurs during DNA replication. Interacts with MAPK15; the interaction is chromatin binding dependent and prevents MDM2-mediated PCNA destruction by inhibiting the association of PCNA with MDM2. Interacts with PARP10 (via PIP-box). Interacts with DDI2. Interacts with HMCES (via PIP-box). Interacts with TRAIP (via PIP-box). Interacts with UHRF2. Interacts with ALKBH2; this interaction is enhanced during the S-phase of the cell cycle. Interacts with ATAD5; the interaction promotes USP1-mediated PCNA deubiquitination. Interacts (when phosphorylated) with GRB2. Interacts with ANG. Interacts with nuclear UNG; this interaction mediates UNG recruitment to S-phase replication foci. Interacts with ERCC6L2 (via an atypical PIP-box); this interaction facilitates cenrtomeric localization of ERCC6L2. In terms of processing, phosphorylated. Phosphorylation at Tyr-211 by EGFR stabilizes chromatin-associated PCNA. Post-translationally, acetylated by CREBBP and p300/EP300; preferentially acetylated by CREBBP on Lys-80, Lys-13 and Lys-14 and on Lys-77 by p300/EP300 upon loading on chromatin in response to UV irradiation. Lysine acetylation disrupts association with chromatin, hence promoting PCNA ubiquitination and proteasomal degradation in response to UV damage in a CREBBP- and EP300-dependent manner. Acetylation disrupts interaction with NUDT15 and promotes degradation. Ubiquitinated. Following DNA damage, can be either monoubiquitinated to stimulate direct bypass of DNA lesions by specialized DNA polymerases or polyubiquitinated to promote recombination-dependent DNA synthesis across DNA lesions by template switching mechanisms. Following induction of replication stress, monoubiquitinated by the UBE2B-RAD18 complex on Lys-164, leading to recruit translesion (TLS) polymerases, which are able to synthesize across DNA lesions in a potentially error-prone manner. An error-free pathway also exists and requires non-canonical polyubiquitination on Lys-164 through 'Lys-63' linkage of ubiquitin moieties by the E2 complex UBE2N-UBE2V2 and the E3 ligases, HLTF, RNF8 and SHPRH. This error-free pathway, also known as template switching, employs recombination mechanisms to synthesize across the lesion, using as a template the undamaged, newly synthesized strand of the sister chromatid. Monoubiquitination at Lys-164 also takes place in undamaged proliferating cells, and is mediated by the DCX(DTL) complex, leading to enhance PCNA-dependent translesion DNA synthesis. Sumoylated during S phase. In terms of processing, methylated on glutamate residues by ARMT1.

It is found in the nucleus. Its function is as follows. Auxiliary protein of DNA polymerase delta and epsilon, is involved in the control of eukaryotic DNA replication by increasing the polymerase's processibility during elongation of the leading strand. Induces a robust stimulatory effect on the 3'-5' exonuclease and 3'-phosphodiesterase, but not apurinic-apyrimidinic (AP) endonuclease, APEX2 activities. Has to be loaded onto DNA in order to be able to stimulate APEX2. Plays a key role in DNA damage response (DDR) by being conveniently positioned at the replication fork to coordinate DNA replication with DNA repair and DNA damage tolerance pathways. Acts as a loading platform to recruit DDR proteins that allow completion of DNA replication after DNA damage and promote postreplication repair: Monoubiquitinated PCNA leads to recruitment of translesion (TLS) polymerases, while 'Lys-63'-linked polyubiquitination of PCNA is involved in error-free pathway and employs recombination mechanisms to synthesize across the lesion. This chain is Proliferating cell nuclear antigen (Pcna), found in Rattus norvegicus (Rat).